The chain runs to 337 residues: MEPETEGPPPTIQVTPLQQMMASCAGAVVTSLMVTPLDVVKIRLQAQNNPFPKGKCFLYSNGLMDHICICEEESKKAWYKKPGNFHGTLDAFLKIVRNEGIKSLWSGLPPTLVMAVPATVIYFTCYEQLSTFLKTKLGENETRIPIVAGIVARFGAVTMISPLELIRTKMQSKTFSYKELYQIVSMKVSEDGWISLWKGWAPTILRDVPFSAMYWYNYENLRRWLCEKSDLYESTFMINFTAGALSGSFAAVATLPFDVVKTQKQTQLWTHEYCKFPEPLDMSTWSIMKNIVADRGFSGLFTGLIPRLVKIVPACAIMISSYELGKGFFQQQNVESR.

Solcar repeat units lie at residues 14-132 (VTPL…LSTF), 140-224 (NETR…LRRW), and 234-328 (STFM…GKGF). The next 6 helical transmembrane spans lie at 20–40 (MMAS…LDVV), 104–124 (LWSG…IYFT), 146–166 (IVAG…LELI), 200–221 (WAPT…YENL), 240–260 (FTAG…FDVV), and 299–319 (GLFT…AIMI).

Belongs to the mitochondrial carrier (TC 2.A.29) family. In terms of tissue distribution, widely expressed at low level.

The protein resides in the mitochondrion inner membrane. It catalyses the reaction glutathione(in) = glutathione(out). Its function is as follows. Probable mitochondrial transporter required for glutathione import into mitochondria. Glutathione, which plays key roles in oxidative metabolism, is produced exclusively in the cytosol and is imported in many organelles. Mitochondrial glutathione is required for the activity and stability of proteins containing iron-sulfur clusters, as well as erythropoiesis. The sequence is that of Mitochondrial glutathione transporter SLC25A40 from Rattus norvegicus (Rat).